Here is a 123-residue protein sequence, read N- to C-terminus: Holo-[acyl-carrier-protein] synthase (123 aa).

Residues D8 and E60 each contribute to the Mg(2+) site.

Belongs to the P-Pant transferase superfamily. AcpS family. The cofactor is Mg(2+).

The protein localises to the cytoplasm. It catalyses the reaction apo-[ACP] + CoA = holo-[ACP] + adenosine 3',5'-bisphosphate + H(+). Transfers the 4'-phosphopantetheine moiety from coenzyme A to a Ser of acyl-carrier-protein. This is Holo-[acyl-carrier-protein] synthase from Wolbachia pipientis wMel.